A 234-amino-acid chain; its full sequence is UPF0309 protein lmo0025 (234 aa).

Residues 31-205 (VADSIMNDGI…ELMLEKGYTP (175 aa)) form the SIS domain.

This sequence belongs to the UPF0309 family.

The sequence is that of UPF0309 protein lmo0025 from Listeria monocytogenes serovar 1/2a (strain ATCC BAA-679 / EGD-e).